A 338-amino-acid polypeptide reads, in one-letter code: 1-aminocyclopropane-1-carboxylate deaminase (338 aa).

Lys-51 carries the N6-(pyridoxal phosphate)lysine modification. Residue Ser-78 is the Nucleophile of the active site.

This sequence belongs to the ACC deaminase/D-cysteine desulfhydrase family. As to quaternary structure, homotrimer. The cofactor is pyridoxal 5'-phosphate.

The catalysed reaction is 1-aminocyclopropane-1-carboxylate + H2O = 2-oxobutanoate + NH4(+). Functionally, catalyzes a cyclopropane ring-opening reaction, the irreversible conversion of 1-aminocyclopropane-1-carboxylate (ACC) to ammonia and alpha-ketobutyrate. Allows growth on ACC as a nitrogen source. This is 1-aminocyclopropane-1-carboxylate deaminase from Burkholderia ambifaria (strain MC40-6).